The sequence spans 379 residues: Cytochrome b (379 aa).

4 helical membrane-spanning segments follow: residues 33–53 (FGSL…FLAM), 77–98 (WMIR…FIHI), 113–133 (WNIG…GYVL), and 178–198 (FFAF…VHLL). Residues His83 and His97 each contribute to the heme b site. The heme b site is built by His182 and His196. An a ubiquinone-binding site is contributed by His201. The next 4 membrane-spanning stretches (helical) occupy residues 226-246 (MKDI…VLFY), 288-308 (LGGV…PMMH), 320-340 (LSQC…WIGG), and 347-367 (FIMI…IIMP).

The protein belongs to the cytochrome b family. In terms of assembly, the cytochrome bc1 complex contains 11 subunits: 3 respiratory subunits (MT-CYB, CYC1 and UQCRFS1), 2 core proteins (UQCRC1 and UQCRC2) and 6 low-molecular weight proteins (UQCRH/QCR6, UQCRB/QCR7, UQCRQ/QCR8, UQCR10/QCR9, UQCR11/QCR10 and a cleavage product of UQCRFS1). This cytochrome bc1 complex then forms a dimer. Requires heme b as cofactor.

It is found in the mitochondrion inner membrane. Component of the ubiquinol-cytochrome c reductase complex (complex III or cytochrome b-c1 complex) that is part of the mitochondrial respiratory chain. The b-c1 complex mediates electron transfer from ubiquinol to cytochrome c. Contributes to the generation of a proton gradient across the mitochondrial membrane that is then used for ATP synthesis. The polypeptide is Cytochrome b (MT-CYB) (Massoutiera mzabi (Mzab gundi)).